The primary structure comprises 194 residues: Protein GrpE (194 aa).

The span at 1 to 12 shows a compositional bias: polar residues; it reads MSSKEQNTPNEQ. Residues 1–39 form a disordered region; sequence MSSKEQNTPNEQASDEIETEQAKNQGADTAAEAADQRDE.

It belongs to the GrpE family. In terms of assembly, homodimer.

It localises to the cytoplasm. Participates actively in the response to hyperosmotic and heat shock by preventing the aggregation of stress-denatured proteins, in association with DnaK and GrpE. It is the nucleotide exchange factor for DnaK and may function as a thermosensor. Unfolded proteins bind initially to DnaJ; upon interaction with the DnaJ-bound protein, DnaK hydrolyzes its bound ATP, resulting in the formation of a stable complex. GrpE releases ADP from DnaK; ATP binding to DnaK triggers the release of the substrate protein, thus completing the reaction cycle. Several rounds of ATP-dependent interactions between DnaJ, DnaK and GrpE are required for fully efficient folding. In Erwinia tasmaniensis (strain DSM 17950 / CFBP 7177 / CIP 109463 / NCPPB 4357 / Et1/99), this protein is Protein GrpE.